We begin with the raw amino-acid sequence, 339 residues long: Phosphate acyltransferase (339 aa).

Belongs to the PlsX family. In terms of assembly, homodimer. Probably interacts with PlsY.

It localises to the cytoplasm. The catalysed reaction is a fatty acyl-[ACP] + phosphate = an acyl phosphate + holo-[ACP]. Its pathway is lipid metabolism; phospholipid metabolism. Catalyzes the reversible formation of acyl-phosphate (acyl-PO(4)) from acyl-[acyl-carrier-protein] (acyl-ACP). This enzyme utilizes acyl-ACP as fatty acyl donor, but not acyl-CoA. This is Phosphate acyltransferase from Methylococcus capsulatus (strain ATCC 33009 / NCIMB 11132 / Bath).